A 438-amino-acid chain; its full sequence is Coenzyme A disulfide reductase (438 aa).

Residue 8–33 (GAVAGGATCASQIRRLDKESDIIIFE) coordinates FAD. Substrate contacts are provided by Thr-15, Gln-19, Arg-22, Ser-39, and Asn-42. Residue Cys-43 is the Nucleophile of the active site. The active-site Redox-active is Cys-43. Residue Lys-71 coordinates substrate. Residue 151–166 (VLVIGAGYVSLEVLEN) participates in NADP(+) binding. 267–277 (TNVPNIYAIGD) provides a ligand contact to FAD. His-299 contributes to the substrate binding site. Residue Tyr-419 participates in FAD binding. Lys-427 is a binding site for substrate.

It belongs to the class-III pyridine nucleotide-disulfide oxidoreductase family. As to quaternary structure, homodimer. FAD serves as cofactor.

The catalysed reaction is NADP(+) + 2 CoA = CoA-disulfide + NADPH + H(+). Catalyzes specifically the NADPH-dependent reduction of coenzyme A disulfide. The protein is Coenzyme A disulfide reductase of Staphylococcus aureus (strain Mu3 / ATCC 700698).